The chain runs to 850 residues: Pierisin (850 aa).

Ricin B-type lectin domains are found at residues 267 to 409 (GEFM…WNII), 413 to 560 (FRPI…WDIK), and 564 to 707 (YQYV…WYLK).

This sequence belongs to the pierisin ADP-ribosyltransferase family.

It carries out the reaction a 2'-deoxyguanosine in DNA + NAD(+) = an N(2)-(ADP-L-ribosyl)-2'-deoxyguanosine in DNA + nicotinamide + H(+). ADP-ribosylates double-stranded DNA by targeting the N2 amino group of dG residues. Induces apoptosis in a range of human cell lines. May play a role in destroying cells during pupation and/or defense against parasites. The protein is Pierisin of Pieris brassicae (White butterfly).